The following is a 499-amino-acid chain: Neuropeptide CCHamide-1 receptor (499 aa).

The Extracellular portion of the chain corresponds to 1–85 (MIANLVSMET…GRRPETYIVP (85 aa)). N-linked (GlcNAc...) asparagine glycosylation is found at Asn33 and Asn61. A helical transmembrane segment spans residues 86 to 106 (ILFALIFVVGVLGNGTLIVVF). The Cytoplasmic segment spans residues 107–117 (LSVRQMRNVPN). The helical transmembrane segment at 118-138 (TYILSLALADLLVIITTVPLA) threads the bilayer. Over 139 to 162 (STVYTVEYWPYGSFLCSLSEFMKD) the chain is Extracellular. Cys154 and Cys240 form a disulfide bridge. A helical transmembrane segment spans residues 163-183 (VSIGVSVFTLTALSGDRYFAI). Topologically, residues 184-203 (VDPLRKFHAHGGGRRATRMT) are cytoplasmic. The helical transmembrane segment at 204-224 (LATAVSIWLLAILCGLPALIG) threads the bilayer. The Extracellular segment spans residues 225-259 (SNLKHLGINEKSIVICYPYPEEWGINYAKSMVLLH). Residues 260-280 (FLVYYAIPLVVIAVFYVLIAL) form a helical membrane-spanning segment. The Cytoplasmic segment spans residues 281-309 (HLMYSASVPGEIQGAVRQVRARRKVAVTV). The chain crosses the membrane as a helical span at residues 310-330 (LAFVVIFGICFLPYHVFFLWF). The Extracellular portion of the chain corresponds to 331-348 (YFWPTAQDDYNAFWHVLR). The helical transmembrane segment at 349-369 (IVAYCMSFANSCANPVALYFV) threads the bilayer. Over 370-499 (SGAFRKHFNR…PAKFQESLLN (130 aa)) the chain is Cytoplasmic.

It belongs to the G-protein coupled receptor 1 family. As to expression, low levels in larval brain and gut with higher levels in adult brain and gut. In the brain expression is widely distributed, including strong expression in the mushroom bodies. Expressed weakly in s-LNv (small ventral lateral neurons) and strongly in l-LNv (large ventral lateral neurons), but not in other clock neurons.

It is found in the cell membrane. In terms of biological role, receptor for the neuropeptide CCHamide-1. Plays a role in the modulation of starvation-induced olfactory behavior where starved flies show increased responsiveness to food odorants, repellants and pheromones. Contributes to regulation of sleep latency (the time required to fall asleep), amount of sleep and depth of sleep (arousability). Involved in modulation of PDP1 and PDF levels in s-LNv (small ventral lateral neurons) clock neurons in response to CCHa1 released by DN1a (anterior dorsal neurons 1) clock neurons, to regulate morning activity. In a subset of dopaminergic cells in the protocerebral anterior medial (PAM) cluster involved in suppressing arousability in response to CCHa1 secreted by gut enteroendocrine cells. In Drosophila melanogaster (Fruit fly), this protein is Neuropeptide CCHamide-1 receptor.